The following is a 118-amino-acid chain: NADH-quinone oxidoreductase subunit A (118 aa).

3 helical membrane-spanning segments follow: residues 5-25 (YAFI…PLVL), 62-82 (LYAL…PWAV), and 87-107 (LGLF…IGLV).

This sequence belongs to the complex I subunit 3 family. As to quaternary structure, NDH-1 is composed of 14 different subunits. Subunits NuoA, H, J, K, L, M, N constitute the membrane sector of the complex.

The protein resides in the cell membrane. It catalyses the reaction a quinone + NADH + 5 H(+)(in) = a quinol + NAD(+) + 4 H(+)(out). NDH-1 shuttles electrons from NADH, via FMN and iron-sulfur (Fe-S) centers, to quinones in the respiratory chain. The immediate electron acceptor for the enzyme in this species is believed to be ubiquinone. Couples the redox reaction to proton translocation (for every two electrons transferred, four hydrogen ions are translocated across the cytoplasmic membrane), and thus conserves the redox energy in a proton gradient. This Herpetosiphon aurantiacus (strain ATCC 23779 / DSM 785 / 114-95) protein is NADH-quinone oxidoreductase subunit A.